The primary structure comprises 210 residues: ATP-dependent dethiobiotin synthetase BioD (210 aa).

13–18 (DVGKTV) is an ATP binding site. Mg(2+) is bound at residue Thr17. Lys33 is a catalytic residue. Positions 47 and 101 each coordinate Mg(2+). ATP is bound by residues 101–104 (EGAG) and 185–187 (PPL).

This sequence belongs to the dethiobiotin synthetase family. In terms of assembly, homodimer. The cofactor is Mg(2+).

Its subcellular location is the cytoplasm. It catalyses the reaction (7R,8S)-7,8-diammoniononanoate + CO2 + ATP = (4R,5S)-dethiobiotin + ADP + phosphate + 3 H(+). Its pathway is cofactor biosynthesis; biotin biosynthesis; biotin from 7,8-diaminononanoate: step 1/2. In terms of biological role, catalyzes a mechanistically unusual reaction, the ATP-dependent insertion of CO2 between the N7 and N8 nitrogen atoms of 7,8-diaminopelargonic acid (DAPA, also called 7,8-diammoniononanoate) to form a ureido ring. This chain is ATP-dependent dethiobiotin synthetase BioD, found in Afipia carboxidovorans (strain ATCC 49405 / DSM 1227 / KCTC 32145 / OM5) (Oligotropha carboxidovorans).